Consider the following 178-residue polypeptide: Caveolin-1 (178 aa).

Position 2 is an N-acetylserine (Ser-2). Ser-2 carries the phosphoserine modification. The segment at 2-94 (SGGKYVDSEG…WKASFTTFTV (93 aa)) is required for homooligomerization. Residues 2–104 (SGGKYVDSEG…TKYWFYRLLS (103 aa)) are Cytoplasmic-facing. N6-acetyllysine; alternate is present on Lys-5. A Glycyl lysine isopeptide (Lys-Gly) (interchain with G-Cter in ubiquitin); alternate cross-link involves residue Lys-5. Phosphotyrosine is present on Tyr-6. Ser-9 is subject to Phosphoserine. A Phosphotyrosine; by ABL1 modification is found at Tyr-14. Phosphotyrosine is present on Tyr-25. Residues Lys-26 and Lys-30 each participate in a glycyl lysine isopeptide (Lys-Gly) (interchain with G-Cter in ubiquitin) cross-link. At Ser-37 the chain carries Phosphoserine. Glycyl lysine isopeptide (Lys-Gly) (interchain with G-Cter in ubiquitin) cross-links involve residues Lys-39, Lys-47, and Lys-57. Residues 82 to 94 (DGIWKASFTTFTV) are interaction with CAVIN3. The helical intramembrane region spans 105–125 (ALFGIPMALVWGIYFAILSFL). The Cytoplasmic segment spans residues 126–178 (HIWAVVPCIKSFLIEIQCISRVYSIYVHTVCDPLFEAVGKIFSNVRINLQKEI). An interacts with SPRY1, SPRY2, SPRY3 and SPRY4 region spans residues 131-142 (VPCIKSFLIEIQ). S-palmitoyl cysteine attachment occurs at residues Cys-133, Cys-143, and Cys-156. An interacts with SPRY1, SPRY2, and SPRY4 region spans residues 149–160 (SIYVHTVCDPLF). Positions 167–178 (FSNVRINLQKEI) are interacts with SPRY1, SPRY2, SPRY3 and SPRY4.

Belongs to the caveolin family. In terms of assembly, homooligomer. Interacts with GLIPR2. Interacts with NOSTRIN. Interacts with SNAP25 and STX1A. Interacts (via the N-terminus) with DPP4; the interaction is direct. Interacts with CTNNB1, CDH1 and JUP. Interacts with PACSIN2; this interaction induces membrane tubulation. Interacts with SLC7A9. Interacts with BMX and BTK. Interacts with TGFBR1. Interacts with CAVIN3 (via leucine-zipper domain) in a cholesterol-sensitive manner. Interacts with CAVIN1. Interacts with EHD2 in a cholesterol-dependent manner. Forms a ternary complex with UBXN6 and VCP; mediates CAV1 targeting to lysosomes for degradation. Interacts with ABCG1; this interaction regulates ABCG1-mediated cholesterol efflux. Interacts with NEU3; this interaction enhances NEU3 sialidase activity within caveola. Interacts (via C-terminus) with SPRY1, SPRY2 (via C-terminus), SPRY3, and SPRY4. Interacts with IGFBP5; this interaction allows trafficking of IGFBP5 from the plasma membrane to the nucleus. Post-translationally, phosphorylated at Tyr-14 by ABL1 in response to oxidative stress. In terms of processing, ubiquitinated. Undergo monoubiquitination and multi- and/or polyubiquitination. Monoubiquitination of N-terminal lysines promotes integration in a ternary complex with UBXN6 and VCP which promotes oligomeric CAV1 targeting to lysosomes for degradation. Ubiquitinated by ZNRF1; leading to degradation and modulation of the TLR4-mediated immune response.

It localises to the golgi apparatus membrane. Its subcellular location is the cell membrane. The protein resides in the membrane. The protein localises to the caveola. It is found in the membrane raft. In terms of biological role, may act as a scaffolding protein within caveolar membranes. Forms a stable heterooligomeric complex with CAV2 that targets to lipid rafts and drives caveolae formation. Mediates the recruitment of CAVIN proteins (CAVIN1/2/3/4) to the caveolae. Interacts directly with G-protein alpha subunits and can functionally regulate their activity. Involved in the costimulatory signal essential for T-cell receptor (TCR)-mediated T-cell activation. Its binding to DPP4 induces T-cell proliferation and NF-kappa-B activation in a T-cell receptor/CD3-dependent manner. Recruits CTNNB1 to caveolar membranes and may regulate CTNNB1-mediated signaling through the Wnt pathway. Negatively regulates TGFB1-mediated activation of SMAD2/3 by mediating the internalization of TGFBR1 from membrane rafts leading to its subsequent degradation. Binds 20(S)-hydroxycholesterol (20(S)-OHC). This Papio anubis (Olive baboon) protein is Caveolin-1 (CAV1).